Here is a 133-residue protein sequence, read N- to C-terminus: Small ribosomal subunit protein uS8 (133 aa).

It belongs to the universal ribosomal protein uS8 family. As to quaternary structure, part of the 30S ribosomal subunit.

Functionally, one of the primary rRNA binding proteins, it binds directly to 16S rRNA central domain where it helps coordinate assembly of the platform of the 30S subunit. The chain is Small ribosomal subunit protein uS8 from Sulfolobus acidocaldarius (strain ATCC 33909 / DSM 639 / JCM 8929 / NBRC 15157 / NCIMB 11770).